Reading from the N-terminus, the 162-residue chain is Beta-lactoglobulin-3 (162 aa).

2 disulfide bridges follow: cysteine 66/cysteine 160 and cysteine 106/cysteine 119.

This sequence belongs to the calycin superfamily. Lipocalin family. As to quaternary structure, monomer.

It is found in the secreted. In terms of biological role, lactoglobulin is the primary component of whey, it binds retinol and is probably involved in the transport of that molecule. This Felis catus (Cat) protein is Beta-lactoglobulin-3 (LGB3).